The primary structure comprises 100 residues: MARKDRLTNERLNKLFDSPFSLVNYVIKQAKNKIARGDVRSSNVAIEALNFLDLYGIQSEYAERDDRERHLSATGERRREQGFGTSRRKDPSLYNWSDVK.

Over residues 65–91 (DDRERHLSATGERRREQGFGTSRRKDP) the composition is skewed to basic and acidic residues. The interval 65–100 (DDRERHLSATGERRREQGFGTSRRKDPSLYNWSDVK) is disordered.

The protein belongs to the chlamydial CPn_0121/CT_031/TC_0300 family.

This is an uncharacterized protein from Chlamydia trachomatis serovar D (strain ATCC VR-885 / DSM 19411 / UW-3/Cx).